A 405-amino-acid polypeptide reads, in one-letter code: ATP-sensitive inward rectifier potassium channel 15 (405 aa).

Topologically, residues 1–90 are cytoplasmic; that stretch reads MVARWVKGSE…LQDLWTTVID (90 aa). A helical transmembrane segment spans residues 91-117; sequence MKWRYKLTLFAATFVMTWFLFGVVYYA. Over 118-143 the chain is Extracellular; it reads IAFIHGDLELGESNSNHTPCIMKVDS. Positions 144 to 160 form an intramembrane region, helical; Pore-forming; sequence LTGAFLFSLESQTTIGY. Positions 157–162 match the Selectivity filter motif; sequence TIGYGV. Residues 161–169 lie on the Extracellular side of the membrane; that stretch reads GVRSITEEC. Residues 170 to 195 form a helical membrane-spanning segment; sequence PHAIFLLVAQLVITTLIEIFITGTFL. Topologically, residues 196–405 are cytoplasmic; the sequence is AKIARPKKRA…RSLLLQQSNV (210 aa).

Belongs to the inward rectifier-type potassium channel (TC 1.A.2.1) family. KCNJ15 subfamily. Can form heteromultimeric channels with Kir5.1/KCNJ16. Interacts with PATJ.

It is found in the membrane. It localises to the cell membrane. The catalysed reaction is K(+)(in) = K(+)(out). Channel activity is regulated by variations of cytosolic pH; reversibly inhibited by acidic pH values. Inhibited by Ba(2+) and Cs(+) in a voltage-dependent manner. Functionally, inward rectifier potassium channels are characterized by a greater tendency to allow potassium to flow into the cell rather than out of it. Their voltage dependence is regulated by the concentration of extracellular potassium; as external potassium is raised, the voltage range of the channel opening shifts to more positive voltages. The inward rectification is mainly due to the blockage of outward current by internal magnesium. This is ATP-sensitive inward rectifier potassium channel 15 (Kcnj15) from Rattus norvegicus (Rat).